Consider the following 201-residue polypeptide: Ubiquinone biosynthesis accessory factor UbiJ (201 aa).

The region spanning L15–A112 is the SCP2 domain.

The protein belongs to the UbiJ family. In terms of assembly, component of the Ubi complex metabolon, which regroups five ubiquinone biosynthesis proteins (UbiE, UbiF, UbiG, UbiH and UbiI) and two accessory factors (UbiK and the lipid-binding protein UbiJ). Interacts with UbiK and forms a complex composed of 2 UbiK subunits and 1 UbiJ subunit. The UbiK-UbiJ complex interacts with palmitoleic acid.

The protein localises to the cytoplasm. The protein operates within cofactor biosynthesis; ubiquinone biosynthesis. In terms of biological role, required for ubiquinone (coenzyme Q) biosynthesis under aerobic conditions. Binds hydrophobic ubiquinone biosynthetic intermediates via its SCP2 domain and is essential for the stability of the Ubi complex. May constitute a docking platform where Ubi enzymes assemble and access their SCP2-bound polyprenyl substrates. The sequence is that of Ubiquinone biosynthesis accessory factor UbiJ from Escherichia coli (strain K12).